A 452-amino-acid polypeptide reads, in one-letter code: Phosphoglucosamine mutase (452 aa).

The active-site Phosphoserine intermediate is the serine 108. Positions 108, 247, 249, and 251 each coordinate Mg(2+). The residue at position 108 (serine 108) is a Phosphoserine.

This sequence belongs to the phosphohexose mutase family. Requires Mg(2+) as cofactor. Post-translationally, activated by phosphorylation.

The catalysed reaction is alpha-D-glucosamine 1-phosphate = D-glucosamine 6-phosphate. In terms of biological role, catalyzes the conversion of glucosamine-6-phosphate to glucosamine-1-phosphate. The chain is Phosphoglucosamine mutase from Burkholderia mallei (strain NCTC 10247).